Here is a 483-residue protein sequence, read N- to C-terminus: Cyclic AMP-dependent transcription factor ATF-7 (483 aa).

The tract at residues 1 to 285 is transactivation domain; that stretch reads MGDDRPFVCN…GMVVGSASTM (285 aa). A C2H2-type zinc finger spans residues 7–31; sequence FVCNAPGCGQRFTNEDHLAVHKHKH. Position 51 is a phosphothreonine; by MAPK11 (Thr-51). A phosphothreonine mark is found at Thr-53 and Thr-101. Lys-107 is covalently cross-linked (Glycyl lysine isopeptide (Lys-Gly) (interchain with G-Cter in SUMO1)). Disordered stretches follow at residues 110–148 and 299–345; these read EPVE…TPTP and HPDA…NRAA. Low complexity-rich tracts occupy residues 114 to 126 and 307 to 320; these read VDSS…ASSP and QPQV…PSTG. The segment covering 326-343 has biased composition (basic and acidic residues); the sequence is TVDEDPDERRQRFLERNR. The bZIP domain occupies 332–395; the sequence is DERRQRFLER…AQLKQLLLAH (64 aa). The segment at 334-354 is basic motif; it reads RRQRFLERNRAAASRCRQKRK. A leucine-zipper region spans residues 360-388; it reads LEKKAEELTSQNIQLSNEVTLLRNEVAQL. 2 disordered regions span residues 407–440 and 464–483; these read TQGY…SNGL and LSMP…SAGR. Residues Ser-413 and Ser-423 each carry the phosphoserine modification. The segment covering 429–440 has biased composition (polar residues); sequence QHSSATAPSNGL.

It belongs to the bZIP family. As to quaternary structure, homodimer; binds DNA as homodimer. Heterodimer; heterodimerizes with other members of ATF family and with JUN family members. Interacts with JNK2; the interaction does not phosphorylate ATF7 but acts as a docking site for other ATF-associated partners such as JUN family members. Interacts (via its transactivation domain) with TAF12 (isoforms TAFII15 and TAFII20); the interaction potentiates the transactivation activity (isoform TAFII20 only) and is inhibited by ATF7 sumoylation. Interacts with TAF4; the interaction inhibits the TAF12-dependent transactivation. Interacts with MAPK9; the interaction does not phosphorylate ATF7 but acts as a docking site for ATF7-associated partners such as JUN. Interacts with Ku complex components XRCC6 and XRCC7. Interacts with TERT. In terms of processing, on EGF stimulation, phosphorylated first on Thr-53 allowing subsequent phosphorylation on Thr-51. This latter phosphorylation prevents sumoylation, increases binding to TAF12 and enhances transcriptional activity. Social isolation stress as well as TNF-alpha also induce the phosphorylation of ATF7. Phosphorylated in proliferating colonic and small intestinal epithelial cells. Sumoylation delays nuclear localization and inhibits transactivation activity through preventing binding to TAF12. RANBP2 appears to be the specific E3 ligase.

Its subcellular location is the nucleus. The protein localises to the nucleoplasm. It localises to the chromosome. The protein resides in the telomere. Functionally, stress-responsive chromatin regulator that plays a role in various biological processes including innate immunological memory, adipocyte differentiation or telomerase regulation. In absence of stress, contributes to the formation of heterochromatin and heterochromatin-like structure by recruiting histone H3K9 tri- and di-methyltransferases thus silencing the transcription of target genes such as STAT1 in adipocytes, or genes involved in innate immunity in macrophages and adipocytes. Stress induces ATF7 phosphorylation that disrupts interactions with histone methyltransferase and enhances the association with coactivators containing histone acetyltransferase and/or histone demethylase, leading to disruption of the heterochromatin-like structure and subsequently transcriptional activation. In response to TNF-alpha, which is induced by various stresses, phosphorylated ATF7 and telomerase are released from telomeres leading to telomere shortening. Plays also a role in maintaining epithelial regenerative capacity and protecting against cell death during intestinal epithelial damage and repair. This is Cyclic AMP-dependent transcription factor ATF-7 (ATF7) from Pongo abelii (Sumatran orangutan).